Consider the following 227-residue polypeptide: MPQLRWLGHAAVELNLGGKHIVIDPMIKDNPVSPVKLNYFENNLNLIIVTHDHYDHLGDTVELMKINPKAYLFATYDLENYLATQFNIPWERMIPANVGGYIDFDGIKLALTKAVHSSEHSDPTGAIVSGEGVTIYHAGDTGLFEDMKLIGEIFKPDYVLLPIGGRFTMDPYQAAIAVEMLKPKKYAIPIHYNTWDLIKVDPNDFVKEVSKRGYKALVLQPGQSVEL.

It belongs to the UPF0173 family.

The protein is UPF0173 metal-dependent hydrolase STK_14180 of Sulfurisphaera tokodaii (strain DSM 16993 / JCM 10545 / NBRC 100140 / 7) (Sulfolobus tokodaii).